The following is a 166-amino-acid chain: Glutamyl-tRNA(Gln) amidotransferase subunit C-2, mitochondrial (166 aa).

This sequence belongs to the GatC family. As to quaternary structure, subunit of the heterotrimeric GatCAB amidotransferase (AdT) complex, composed of A, B and C subunits.

The protein resides in the mitochondrion. The enzyme catalyses L-glutamyl-tRNA(Gln) + L-glutamine + ATP + H2O = L-glutaminyl-tRNA(Gln) + L-glutamate + ADP + phosphate + H(+). Functionally, allows the formation of correctly charged Gln-tRNA(Gln) through the transamidation of misacylated Glu-tRNA(Gln) in the mitochondria. The reaction takes place in the presence of glutamine and ATP through an activated gamma-phospho-Glu-tRNA(Gln). This Culex quinquefasciatus (Southern house mosquito) protein is Glutamyl-tRNA(Gln) amidotransferase subunit C-2, mitochondrial.